A 267-amino-acid chain; its full sequence is GTP cyclohydrolase FolE2 (267 aa).

Belongs to the GTP cyclohydrolase IV family.

It carries out the reaction GTP + H2O = 7,8-dihydroneopterin 3'-triphosphate + formate + H(+). It functions in the pathway cofactor biosynthesis; 7,8-dihydroneopterin triphosphate biosynthesis; 7,8-dihydroneopterin triphosphate from GTP: step 1/1. Converts GTP to 7,8-dihydroneopterin triphosphate. The polypeptide is GTP cyclohydrolase FolE2 (Nitrosomonas eutropha (strain DSM 101675 / C91 / Nm57)).